A 130-amino-acid polypeptide reads, in one-letter code: ATP synthase epsilon chain (130 aa).

It belongs to the ATPase epsilon chain family. In terms of assembly, F-type ATPases have 2 components, CF(1) - the catalytic core - and CF(0) - the membrane proton channel. CF(1) has five subunits: alpha(3), beta(3), gamma(1), delta(1), epsilon(1). CF(0) has three main subunits: a, b and c.

It localises to the cell membrane. Its function is as follows. Produces ATP from ADP in the presence of a proton gradient across the membrane. This Nocardia farcinica (strain IFM 10152) protein is ATP synthase epsilon chain.